Consider the following 2006-residue polypeptide: Supporter of activation of yellow protein (2006 aa).

Disordered stretches follow at residues 1–208 (MNDL…RRVE), 313–347 (MPAK…SSLA), 458–564 (EEKP…AQSQ), 744–794 (DTQD…DPAR), 821–916 (DLEG…KSRR), 929–1029 (VSVG…NNNS), 1044–1082 (CSSS…SDPL), and 1099–1196 (QQLR…SAVA). A compositionally biased stretch (low complexity) spans 10-60 (VAATSSSGSESGTAVESAAATSTAGSAGAAGRPQSNCSANSNAKSVAASST). Residues 67 to 81 (VSSTSSPAQRDQQLN) are compositionally biased toward polar residues. Residues 118 to 128 (SPPPTLPPPTT) are compositionally biased toward pro residues. Residues 129–168 (PCDDAPSTTGASASASSASGEAPSAASAAGAAGGPMAATA) are compositionally biased toward low complexity. The segment covering 189–199 (ANPNSNANESQ) has biased composition (polar residues). A compositionally biased stretch (low complexity) spans 321–347 (LSSLSPASASSSSASSSSSSSSSSSLA). Over residues 485–494 (GGESNSSSQE) the composition is skewed to polar residues. Basic and acidic residues predominate over residues 525–534 (SLSKEHDPKI). The segment covering 543–563 (ASNGIASGGSKASKASKSAQS) has biased composition (low complexity). Residues 744 to 758 (DTQDNNNENHLKRTN) show a composition bias toward basic and acidic residues. Polar residues-rich tracts occupy residues 759–769 (SEGNESPSSRL) and 828–844 (PPTQ…NGAL). Over residues 861-870 (PATPQPPPVA) the composition is skewed to pro residues. 2 stretches are compositionally biased toward basic and acidic residues: residues 936-945 (ADMKAKEKES) and 963-972 (ESPKTRDHRP). Composition is skewed to low complexity over residues 978-990 (RTTT…LQPT) and 1018-1029 (SSESESNNNNNS). Positions 1053–1080 (GAAANQQVIGGSGSSSMLPPTTILSSSD) are enriched in polar residues. The span at 1103–1112 (SSRPSSISCG) shows a compositional bias: low complexity. Residues 1147–1158 (GRGRGRRSRGGR) show a composition bias toward basic residues. Low complexity predominate over residues 1161–1173 (GSSSVDRAVSVGG). The tract at residues 1340-1573 (MIQEQVALYL…PPTDLMAQLL (234 aa)) is SAY. Residues 1579–1685 (AVGSDEIKTS…AGSEDEDGNE (107 aa)) are disordered. 2 stretches are compositionally biased toward low complexity: residues 1627–1652 (TASS…SSDT) and 1660–1677 (FSST…SGAG). The segment at 1694-1751 (TCGVCLRSQHRNARDMPEAFIRCYTCRKRVHPSCVDMPPRMVGRVRNYNWQCAGCKCC) adopts a PHD-type 1; degenerate zinc-finger fold. The PHD-type 2; degenerate zinc finger occupies 1753 to 1796 (KCRSSQRPGKMLYCEQCDRGYHIYCLGLRTVPDGRWSCERCCFC). The tract at residues 1887–1911 (TSAQTDDSPMPSPGLTTNGGRALSP) is disordered.

It belongs to the SAYP family. In terms of tissue distribution, widely expressed. Highly expressed in ovary. Expressed in nursing cells and growing oocytes at all stages of development and accumulates in mature oocytes. Expressed in the nuclei of syncytium blastoderm of early embryos and in the nuclei of different tissues of late embryos, larvae, and adults.

The protein localises to the nucleus. It localises to the cytoplasm. The protein resides in the chromosome. Essential transcription regulator during early development. Coactivates transcription of some euchromatin genes and repress transcription in of euchromatin genes translocated to heterochromatin. This Drosophila melanogaster (Fruit fly) protein is Supporter of activation of yellow protein (e(y)3).